The primary structure comprises 545 residues: Chaperonin GroEL 1 (545 aa).

ATP is bound by residues 30–33 (TLGP), Lys-51, 87–91 (DGTTT), Gly-415, and Asp-495.

This sequence belongs to the chaperonin (HSP60) family. Forms a cylinder of 14 subunits composed of two heptameric rings stacked back-to-back. Interacts with the co-chaperonin GroES.

The protein resides in the cytoplasm. It carries out the reaction ATP + H2O + a folded polypeptide = ADP + phosphate + an unfolded polypeptide.. Its function is as follows. Together with its co-chaperonin GroES, plays an essential role in assisting protein folding. The GroEL-GroES system forms a nano-cage that allows encapsulation of the non-native substrate proteins and provides a physical environment optimized to promote and accelerate protein folding. The polypeptide is Chaperonin GroEL 1 (Sinorhizobium medicae (strain WSM419) (Ensifer medicae)).